Here is a 78-residue protein sequence, read N- to C-terminus: Acyl carrier protein (78 aa).

One can recognise a Carrier domain in the interval 2–77 (SEIASRVKAI…DAVSYIEEHA (76 aa)). Residue serine 37 is modified to O-(pantetheine 4'-phosphoryl)serine.

Belongs to the acyl carrier protein (ACP) family. 4'-phosphopantetheine is transferred from CoA to a specific serine of apo-ACP by AcpS. This modification is essential for activity because fatty acids are bound in thioester linkage to the sulfhydryl of the prosthetic group.

It is found in the cytoplasm. Its pathway is lipid metabolism; fatty acid biosynthesis. Functionally, carrier of the growing fatty acid chain in fatty acid biosynthesis. This is Acyl carrier protein from Bacteroides thetaiotaomicron (strain ATCC 29148 / DSM 2079 / JCM 5827 / CCUG 10774 / NCTC 10582 / VPI-5482 / E50).